The primary structure comprises 456 residues: General transcription factor IIE subunit 1 (456 aa).

Residues 11 to 100 enclose the HTH TFE/IIEalpha-type domain; the sequence is LDDLVKMVIR…LWYIDYKHII (90 aa). The segment at 129–157 adopts a C4-type zinc-finger fold; that stretch reads CQTCHKVYTALDIPKLLNMDTGALACEIC. A disordered region spans residues 345–402; that stretch reads ESAPDSGDADGNGSNSGSGGSTIEGNDGGNGEHQNKKMKLDDSQTVSSMSQSDDDGKD. The segment covering 347-357 has biased composition (low complexity); it reads APDSGDADGNG. A compositionally biased stretch (gly residues) spans 358–375; it reads SNSGSGGSTIEGNDGGNG. Residues 377–386 are compositionally biased toward basic and acidic residues; sequence HQNKKMKLDD.

The protein belongs to the TFIIE alpha subunit family. TFIIE is a tetramer of two alpha and two beta subunits.

The protein localises to the nucleus. Recruits TFIIH to the initiation complex and stimulates the RNA polymerase II C-terminal domain kinase and DNA-dependent ATPase activities of TFIIH. Both TFIIH and TFIIE are required for promoter clearance by RNA polymerase. This Dictyostelium discoideum (Social amoeba) protein is General transcription factor IIE subunit 1 (gtf2e1-1).